Here is a 263-residue protein sequence, read N- to C-terminus: Glutamate/glutamine/aspartate/asparagine transport ATP-binding protein BztD (263 aa).

Positions 23–257 (IQISQMNKWY…PQSERTKQFL (235 aa)) constitute an ABC transporter domain. 55–62 (GPSGSGKS) provides a ligand contact to ATP.

The protein belongs to the ABC transporter superfamily. In terms of assembly, bztB and BztC form a heterodimer which can form a membrane complex with a homodimer of BztD.

It is found in the cell membrane. In terms of biological role, part of a binding-protein-dependent transport system for glutamate, glutamine, aspartate, asparagine. Probably responsible for energy coupling to the transport system. The chain is Glutamate/glutamine/aspartate/asparagine transport ATP-binding protein BztD (bztD) from Rhodobacter capsulatus (strain ATCC BAA-309 / NBRC 16581 / SB1003).